Here is a 209-residue protein sequence, read N- to C-terminus: Ribosomal RNA large subunit methyltransferase E (209 aa).

Residues glycine 63, tryptophan 65, aspartate 83, aspartate 99, and aspartate 124 each coordinate S-adenosyl-L-methionine. Lysine 164 serves as the catalytic Proton acceptor. The region spanning glutamate 191–glycine 209 is the TRAM domain.

It belongs to the class I-like SAM-binding methyltransferase superfamily. RNA methyltransferase RlmE family.

The protein localises to the cytoplasm. The enzyme catalyses uridine(2552) in 23S rRNA + S-adenosyl-L-methionine = 2'-O-methyluridine(2552) in 23S rRNA + S-adenosyl-L-homocysteine + H(+). Its function is as follows. Specifically methylates the uridine in position 2552 of 23S rRNA at the 2'-O position of the ribose in the fully assembled 50S ribosomal subunit. This chain is Ribosomal RNA large subunit methyltransferase E, found in Haemophilus influenzae (strain ATCC 51907 / DSM 11121 / KW20 / Rd).